The sequence spans 295 residues: UDP-N-acetylenolpyruvoylglucosamine reductase (295 aa).

Positions 23-188 constitute an FAD-binding PCMH-type domain; it reads KVGGPADFLA…ISAKFALKPG (166 aa). Arg-167 is a catalytic residue. The active-site Proton donor is the Ser-217. Residue Glu-287 is part of the active site.

This sequence belongs to the MurB family. FAD is required as a cofactor.

Its subcellular location is the cytoplasm. It carries out the reaction UDP-N-acetyl-alpha-D-muramate + NADP(+) = UDP-N-acetyl-3-O-(1-carboxyvinyl)-alpha-D-glucosamine + NADPH + H(+). Its pathway is cell wall biogenesis; peptidoglycan biosynthesis. In terms of biological role, cell wall formation. The protein is UDP-N-acetylenolpyruvoylglucosamine reductase of Streptococcus pyogenes serotype M18 (strain MGAS8232).